The chain runs to 401 residues: tRNA pseudouridine synthase Pus10 (401 aa).

The THUMP domain maps to 64–195; that stretch reads ALAKSGHRES…DGSVSVEVMP (132 aa).

The protein belongs to the pseudouridine synthase Pus10 family.

The enzyme catalyses uridine(54) in tRNA = pseudouridine(54) in tRNA. It carries out the reaction uridine(55) in tRNA = pseudouridine(55) in tRNA. Functionally, responsible for synthesis of pseudouridine from uracil-54 and uracil-55 in the psi GC loop of transfer RNAs. The sequence is that of tRNA pseudouridine synthase Pus10 from Caldivirga maquilingensis (strain ATCC 700844 / DSM 13496 / JCM 10307 / IC-167).